The primary structure comprises 182 residues: NAD(P)H-quinone oxidoreductase subunit I, chloroplastic (182 aa).

4Fe-4S ferredoxin-type domains are found at residues 52-81 and 92-121; these read GRIH…VDWE and KSYS…MTEE. Residues Cys61, Cys64, Cys67, Cys71, Cys101, Cys104, Cys107, and Cys111 each contribute to the [4Fe-4S] cluster site.

Belongs to the complex I 23 kDa subunit family. NDH is composed of at least 16 different subunits, 5 of which are encoded in the nucleus. [4Fe-4S] cluster is required as a cofactor.

Its subcellular location is the plastid. It localises to the chloroplast thylakoid membrane. It carries out the reaction a plastoquinone + NADH + (n+1) H(+)(in) = a plastoquinol + NAD(+) + n H(+)(out). It catalyses the reaction a plastoquinone + NADPH + (n+1) H(+)(in) = a plastoquinol + NADP(+) + n H(+)(out). In terms of biological role, NDH shuttles electrons from NAD(P)H:plastoquinone, via FMN and iron-sulfur (Fe-S) centers, to quinones in the photosynthetic chain and possibly in a chloroplast respiratory chain. The immediate electron acceptor for the enzyme in this species is believed to be plastoquinone. Couples the redox reaction to proton translocation, and thus conserves the redox energy in a proton gradient. The chain is NAD(P)H-quinone oxidoreductase subunit I, chloroplastic from Chaetosphaeridium globosum (Charophycean green alga).